The primary structure comprises 397 residues: Elongation factor Tu (397 aa).

One can recognise a tr-type G domain in the interval 10 to 207 (KPHVNIGTIG…ACDSYIEEPE (198 aa)). Residues 19 to 26 (GHIDHGKT) form a G1 region. 19 to 26 (GHIDHGKT) contacts GTP. Threonine 26 contributes to the Mg(2+) binding site. Positions 60 to 64 (GITIA) are G2. Positions 81-84 (DCPG) are G3. GTP-binding positions include 81–85 (DCPGH) and 136–139 (NKCD). The interval 136-139 (NKCD) is G4. Positions 174–176 (SAL) are G5.

Belongs to the TRAFAC class translation factor GTPase superfamily. Classic translation factor GTPase family. EF-Tu/EF-1A subfamily. As to quaternary structure, monomer.

Its subcellular location is the cytoplasm. The enzyme catalyses GTP + H2O = GDP + phosphate + H(+). In terms of biological role, GTP hydrolase that promotes the GTP-dependent binding of aminoacyl-tRNA to the A-site of ribosomes during protein biosynthesis. The sequence is that of Elongation factor Tu from Maridesulfovibrio salexigens (strain ATCC 14822 / DSM 2638 / NCIMB 8403 / VKM B-1763) (Desulfovibrio salexigens).